The following is a 208-amino-acid chain: Small ribosomal subunit protein uS4 (208 aa).

The S4 RNA-binding domain occupies 98-160 (CRLDNVVYRM…AKKQSRIQLA (63 aa)).

Belongs to the universal ribosomal protein uS4 family. As to quaternary structure, part of the 30S ribosomal subunit. Contacts protein S5. The interaction surface between S4 and S5 is involved in control of translational fidelity.

Functionally, one of the primary rRNA binding proteins, it binds directly to 16S rRNA where it nucleates assembly of the body of the 30S subunit. Its function is as follows. With S5 and S12 plays an important role in translational accuracy. This is Small ribosomal subunit protein uS4 from Ruthia magnifica subsp. Calyptogena magnifica.